The chain runs to 430 residues: C4-dicarboxylate transport protein (430 aa).

8 helical membrane passes run 9 to 29 (VLYV…HFYP), 45 to 65 (LIKM…IAGM), 79 to 99 (LLYF…ATHL), 149 to 169 (GEIL…AHLG), 185 to 205 (VLFG…FGAM), 223 to 243 (LIGT…GAIA), 308 to 328 (IYMT…LTWM), and 356 to 376 (AATL…ILGI).

This sequence belongs to the dicarboxylate/amino acid:cation symporter (DAACS) (TC 2.A.23) family.

The protein localises to the cell inner membrane. Its function is as follows. Responsible for the transport of dicarboxylates such as succinate, fumarate, and malate from the periplasm across the membrane. This is C4-dicarboxylate transport protein from Burkholderia orbicola (strain MC0-3).